Here is a 576-residue protein sequence, read N- to C-terminus: Lysine--tRNA ligase (576 aa).

Glu-413 and Glu-420 together coordinate Mg(2+).

It belongs to the class-II aminoacyl-tRNA synthetase family. As to quaternary structure, homodimer. Mg(2+) is required as a cofactor.

It localises to the cytoplasm. The enzyme catalyses tRNA(Lys) + L-lysine + ATP = L-lysyl-tRNA(Lys) + AMP + diphosphate. This chain is Lysine--tRNA ligase, found in Bacteroides thetaiotaomicron (strain ATCC 29148 / DSM 2079 / JCM 5827 / CCUG 10774 / NCTC 10582 / VPI-5482 / E50).